A 440-amino-acid chain; its full sequence is Polyprenol-phosphate-mannose-dependent alpha-(1-2)-phosphatidylinositol mannoside mannosyltransferase (440 aa).

11 consecutive transmembrane segments (helical) span residues 15–35 (LAPTIAWRVFQLLTLAGVLWV), 87–107 (LAAIAFAPFAWLSLPLASSAI), 109–129 (ATTLVLLIVATTIVLTRLDVW), 144–161 (AWLAAAMVAPAVIYLEPI), 164–184 (NFEFGQINVVLMTLVIADCVP), 193–213 (LLLGLAIALKLTPAVFLLYFL), 224–244 (TAATAVVASLAGFALAWSDSV), 281–301 (PRFILWVLACFAVLALTVWAA), 316–336 (APVLALVCVALFGLVVSPVSW), 360–380 (VWFTALTAAGLALTVWTPITL), and 395–415 (LAGGSYVWWAFAVIVVIGLVS). A disordered region spans residues 419–440 (THTGDAHETDEPLVPLARGEAG).

Belongs to the glycosyltransferase 87 family.

It is found in the cell membrane. It participates in phospholipid metabolism; phosphatidylinositol metabolism. In terms of biological role, responsible for the addition of alpha-(1-2) mannose branches to the linear mannan core on the biosynthetic pathway to mature Lipoarabinomannan (LAM). This chain is Polyprenol-phosphate-mannose-dependent alpha-(1-2)-phosphatidylinositol mannoside mannosyltransferase, found in Mycolicibacterium smegmatis (strain ATCC 700084 / mc(2)155) (Mycobacterium smegmatis).